Consider the following 1499-residue polypeptide: Phospholipid-transporting ATPase VA (1499 aa).

Positions 1–53 are disordered; it reads MEREPAGTEEPGPPGRRRRREGRTRTVRSNLLPPPGAEDPAAGAAKGERRRRR. Residues 1-86 are Cytoplasmic-facing; the sequence is MEREPAGTEE…KNLFEQFHRP (86 aa). The span at 15 to 26 shows a compositional bias: basic residues; sequence GRRRRREGRTRT. Residues 87–106 traverse the membrane as a helical segment; that stretch reads ANVYFVFIALLNFVPAVNAF. Residues 107–110 are Exoplasmic loop-facing; it reads QPGL. A helical transmembrane segment spans residues 111–128; the sequence is ALAPVLFILAITAFRDLW. At 129 to 309 the chain is on the cytoplasmic side; the sequence is EDYSRHRSDH…SKLERQMNCD (181 aa). Residues 310-332 form a helical membrane-spanning segment; sequence VLWCVLLLVCMSLFSAVGHGLWI. The Exoplasmic loop segment spans residues 333–362; it reads WRYQEKKSLFYVPKSDGSSLSPVTAAVYSF. Residues 363-384 traverse the membrane as a helical segment; it reads LTMIIVLQVLIPISLYVSIEIV. Residues 385 to 1087 are Cytoplasmic-facing; that stretch reads KACQVYFINQ…GHWCYSRLAN (703 aa). The active-site 4-aspartylphosphate intermediate is the Asp427. Residues Asp427, Lys428, and Thr429 each coordinate ATP. Asp427 is a binding site for Mg(2+). Thr429 lines the Mg(2+) pocket. The disordered stretch occupies residues 464-531; it reads ADSEEEEVVP…AFSSPMEKDI (68 aa). Ser466 is subject to Phosphoserine. A compositionally biased stretch (polar residues) spans 477–499; that stretch reads SVSQRGSIGSHQSVRVVHRTQST. Residues Glu700, Phe742, Lys766, Arg809, Thr889, Gly890, Asp891, Arg1005, and Lys1011 each coordinate ATP. A Mg(2+)-binding site is contributed by Asp1031. 2 residues coordinate ATP: Asn1034 and Asp1035. Asp1035 lines the Mg(2+) pocket. A helical membrane pass occupies residues 1088 to 1108; that stretch reads MVLYFFYKNTMFVGLLFWFQF. The Exoplasmic loop portion of the chain corresponds to 1109–1119; it reads FCGFSASTMID. The helical transmembrane segment at 1120–1140 threads the bilayer; the sequence is QWYLIFFNLLFSSLPPLVTGV. Residues 1141–1170 are Cytoplasmic-facing; sequence LDRDVPANVLLTNPQLYKSGQNMEEYRPRT. A helical membrane pass occupies residues 1171–1192; the sequence is FWFNMADAAFQSLVCFSIPYLA. At 1193 to 1199 the chain is on the exoplasmic loop side; that stretch reads YYDSNVD. The chain crosses the membrane as a helical span at residues 1200–1222; the sequence is LFTWGTPIVTIALLTFLLHLGIE. Over 1223 to 1228 the chain is Cytoplasmic; sequence TKTWTW. Residues 1229 to 1249 form a helical membrane-spanning segment; the sequence is LNWITCGFSVLLFFTVALIYN. At 1250-1267 the chain is on the exoplasmic loop side; sequence ASCATCYPPSNPYWTMQA. The chain crosses the membrane as a helical span at residues 1268-1292; the sequence is LLGDPVFYLTCLMTPVAALLPRLFF. The Cytoplasmic segment spans residues 1293–1499; that stretch reads RSLQGRVFPT…LIGASSRRSQ (207 aa). Disordered stretches follow at residues 1311-1356 and 1464-1499; these read TRKS…PSWH and DGQA…RRSQ. Basic and acidic residues predominate over residues 1330-1340; sequence LPKDSGTEHSS. The segment covering 1341 to 1356 has biased composition (polar residues); the sequence is GRTVKTSVPLSQPSWH.

This sequence belongs to the cation transport ATPase (P-type) (TC 3.A.3) family. Type IV subfamily. In terms of assembly, component of a P4-ATPase flippase complex which consists of a catalytic alpha subunit ATP10A and an accessory beta subunit TMEM30A. Requires Mg(2+) as cofactor. Post-translationally, autophosphorylated at the conserved aspartate of the P-type ATPase signature sequence. In terms of tissue distribution, widely expressed, with highest levels in kidney, followed by lung, brain, prostate, testis, ovary and small intestine.

The protein resides in the cell membrane. It localises to the endoplasmic reticulum membrane. The enzyme catalyses ATP + H2O + phospholipidSide 1 = ADP + phosphate + phospholipidSide 2.. It catalyses the reaction a 1,2-diacyl-sn-glycero-3-phosphocholine(out) + ATP + H2O = a 1,2-diacyl-sn-glycero-3-phosphocholine(in) + ADP + phosphate + H(+). It carries out the reaction a beta-D-glucosyl-(1&lt;-&gt;1')-N-acylsphing-4-enine(out) + ATP + H2O = a beta-D-glucosyl-(1&lt;-&gt;1')-N-acylsphing-4-enine(in) + ADP + phosphate + H(+). Inhibited under hypotonic conditions. Functionally, catalytic component of P4-ATPase flippase complex, which catalyzes the hydrolysis of ATP coupled to the transport of phosphatidylcholine (PC) from the outer to the inner leaflet of the plasma membrane. Initiates inward plasma membrane bending and recruitment of Bin/amphiphysin/Rvs (BAR) domain-containing proteins involved in membrane tubulation and cell trafficking. Facilitates ITGB1/beta1 integrin endocytosis, delaying cell adhesion and cell spreading on extracellular matrix. Has low flippase activity toward glucosylceramide (GlcCer). The sequence is that of Phospholipid-transporting ATPase VA from Homo sapiens (Human).